Reading from the N-terminus, the 199-residue chain is Probable NADH dehydrogenase [ubiquinone] iron-sulfur protein 7, mitochondrial (199 aa).

4 residues coordinate [4Fe-4S] cluster: cysteine 74, cysteine 75, cysteine 139, and cysteine 169.

The protein belongs to the complex I 20 kDa subunit family. In terms of assembly, complex I is composed of 45 different subunits This is a component of the iron-sulfur (IP) fragment of the enzyme. [4Fe-4S] cluster serves as cofactor.

The protein resides in the mitochondrion. The enzyme catalyses a ubiquinone + NADH + 5 H(+)(in) = a ubiquinol + NAD(+) + 4 H(+)(out). Its function is as follows. Core subunit of the mitochondrial membrane respiratory chain NADH dehydrogenase (Complex I) that is believed to belong to the minimal assembly required for catalysis. Complex I functions in the transfer of electrons from NADH to the respiratory chain. The immediate electron acceptor for the enzyme is believed to be ubiquinone. In Caenorhabditis elegans, this protein is Probable NADH dehydrogenase [ubiquinone] iron-sulfur protein 7, mitochondrial (nduf-7).